The primary structure comprises 259 residues: MELTIFQVDAFADSPFQGNPAAVCPLDAWLDDERLQAIAEENNLSETAFVVGRDGDYRLRWFTPQVEVDLCGHATLATAWVLIHKLDDASPVLRFATRSGELSVRREGDSLAMDFPAKRPEPCATPDGLLEALGIAEAEVLKTDDYLVVVDDEKTIAALAPDFARLKGLPCRGVAVTARSQRFDFVSRWFGPNVGVNEDPVTGSAHTSLAPYWAQRLGKTRLSAEQGGARKGRLECDVRGERVVISGKAALYMSGTLHL.

The active site involves Glu46.

The protein belongs to the PhzF family.

This is an uncharacterized protein from Pseudomonas aeruginosa (strain ATCC 15692 / DSM 22644 / CIP 104116 / JCM 14847 / LMG 12228 / 1C / PRS 101 / PAO1).